Reading from the N-terminus, the 284-residue chain is Bifunctional protein FolD (284 aa).

Residues 163-165 (GRS) and serine 188 each bind NADP(+).

The protein belongs to the tetrahydrofolate dehydrogenase/cyclohydrolase family. As to quaternary structure, homodimer.

The enzyme catalyses (6R)-5,10-methylene-5,6,7,8-tetrahydrofolate + NADP(+) = (6R)-5,10-methenyltetrahydrofolate + NADPH. The catalysed reaction is (6R)-5,10-methenyltetrahydrofolate + H2O = (6R)-10-formyltetrahydrofolate + H(+). It participates in one-carbon metabolism; tetrahydrofolate interconversion. Functionally, catalyzes the oxidation of 5,10-methylenetetrahydrofolate to 5,10-methenyltetrahydrofolate and then the hydrolysis of 5,10-methenyltetrahydrofolate to 10-formyltetrahydrofolate. The chain is Bifunctional protein FolD from Lactococcus lactis subsp. lactis (strain IL1403) (Streptococcus lactis).